A 373-amino-acid polypeptide reads, in one-letter code: Geraniol dehydrogenase (373 aa).

The Zn(2+) site is built by cysteine 47, histidine 67, cysteine 96, cysteine 99, cysteine 102, cysteine 110, and cysteine 175.

It belongs to the zinc-containing alcohol dehydrogenase family. As to quaternary structure, homodimer. It depends on Zn(2+) as a cofactor.

It carries out the reaction (2E)-geraniol + NAD(+) = (2E)-geranial + NADH + H(+). The enzyme catalyses perillyl alcohol + NAD(+) = perillyl aldehyde + NADH + H(+). It participates in terpene metabolism; monoterpene degradation. Is inhibited by EDTA, N-ethylmaleimide, diethylpyrocarbonate, and 1-cyclohexyl-N-(2-morpholinoethyl)carbodiimide in vitro. Its function is as follows. Involved in the degradation of the monoterpenes beta-myrcene and limonene. During anaerobic degradation of beta-myrcene, catalyzes the NAD(+)-dependent oxidation of geraniol to geranial. Can also catalyze the oxidation of (S)-perillyl alcohol to perillyl aldehyde, and to a lesser extent, the oxidation of nerol, citronellol, cumic alcohol, and benzyl alcohol. Cannot use NADP(+) instead of NAD(+) as cosubstrate. The sequence is that of Geraniol dehydrogenase from Castellaniella defragrans (strain DSM 12143 / CCUG 39792 / 65Phen) (Alcaligenes defragrans).